A 70-amino-acid polypeptide reads, in one-letter code: Large ribosomal subunit protein bL31 (70 aa).

Residues C17, C19, C37, and C40 each contribute to the Zn(2+) site.

It belongs to the bacterial ribosomal protein bL31 family. Type A subfamily. Part of the 50S ribosomal subunit. Zn(2+) is required as a cofactor.

Its function is as follows. Binds the 23S rRNA. The chain is Large ribosomal subunit protein bL31 from Clostridium kluyveri (strain NBRC 12016).